Consider the following 552-residue polypeptide: Putative transport protein HAPS_0158 (552 aa).

The next 5 membrane-spanning stretches (helical) occupy residues 4–24 (IALT…IGHI), 28–48 (GVSL…HFMT), 65–85 (FGLI…FFAS), 95–115 (AFAV…HKIF), and 157–177 (MGYA…MWLI). RCK C-terminal domains lie at 193-275 (DSAT…ILGE) and 277-360 (VNVS…IIGN). Helical transmembrane passes span 370–390 (MLPI…PIYL), 393–413 (FPVA…LILA), 438–458 (IVLF…NTLL), 463–483 (LAWI…TGLV), 492–512 (YLSL…LAFA), and 532–552 (LVMF…WVAG).

It belongs to the AAE transporter (TC 2.A.81) family. YidE subfamily.

Its subcellular location is the cell membrane. In Glaesserella parasuis serovar 5 (strain SH0165) (Haemophilus parasuis), this protein is Putative transport protein HAPS_0158.